The chain runs to 105 residues: Met repressor (105 aa).

It belongs to the MetJ family. As to quaternary structure, homodimer.

It is found in the cytoplasm. Functionally, this regulatory protein, when combined with SAM (S-adenosylmethionine) represses the expression of the methionine regulon and of enzymes involved in SAM synthesis. The protein is Met repressor of Hamiltonella defensa subsp. Acyrthosiphon pisum (strain 5AT).